A 175-amino-acid polypeptide reads, in one-letter code: Glutamyl-tRNA(Gln) amidotransferase subunit C, mitochondrial (175 aa).

It belongs to the GatC family. Subunit of the heterotrimeric GatCAB amidotransferase (AdT) complex, composed of A, B and C subunits.

Its subcellular location is the mitochondrion. The enzyme catalyses L-glutamyl-tRNA(Gln) + L-glutamine + ATP + H2O = L-glutaminyl-tRNA(Gln) + L-glutamate + ADP + phosphate + H(+). Functionally, allows the formation of correctly charged Gln-tRNA(Gln) through the transamidation of misacylated Glu-tRNA(Gln) in the mitochondria. The reaction takes place in the presence of glutamine and ATP through an activated gamma-phospho-Glu-tRNA(Gln). In Caenorhabditis elegans, this protein is Glutamyl-tRNA(Gln) amidotransferase subunit C, mitochondrial.